Consider the following 3767-residue polypeptide: Transmembrane cell adhesion receptor mua-3 (3767 aa).

Residues 1-24 form the signal peptide; that stretch reads MQAGISIFFLFLHIPIFFVNCSNS. Residues 25 to 3417 lie on the Extracellular side of the membrane; that stretch reads TSCVAREEFQ…CQVAPSNASL (3393 aa). One can recognise an LDL-receptor class A 1 domain in the interval 26-63; it reads SCVAREEFQCKMDDSCISMKKWQDGVDDCYDGSDEVCL. 10 disulfides stabilise this stretch: Cys27–Cys41, Cys35–Cys54, Cys62–Cys76, Cys69–Cys89, Cys97–Cys110, Cys104–Cys123, Cys131–Cys144, Cys138–Cys157, Cys165–Cys179, and Cys172–Cys192. 3 LDL-receptor class A domains span residues 96–132, 133–166, and 167–209; these read GCPA…EPCA, QNQF…EECT, and TSQF…ANCT. 2 N-linked (GlcNAc...) asparagine glycosylation sites follow: Asn201 and Asn207. EGF-like domains are found at residues 225-268, 375-416, 418-466, 468-517, 519-566, 614-663, 665-713, 714-760, 762-810, 816-860, 861-908, 910-961, 963-1012, 1029-1070, 1071-1118, 1120-1168, and 1170-1219; these read KLKF…DKCI, NRDD…GTCR, LIDE…RKCR, LINE…RNCT, AINE…RKCV, RANP…RKCV, AVDE…RSCK, KADM…RVCR, VVNE…KNCV, DPPE…GRCV, VINE…RICR, RVNE…RRCI, AVNE…RICT, TDDG…GSCR, VYSA…RICK, LINE…RQCT, and SNNE…RVCT. Disulfide bonds link Cys229-Cys243, Cys235-Cys252, Cys254-Cys267, Cys381-Cys392, Cys386-Cys402, Cys404-Cys415, Cys422-Cys435, Cys429-Cys444, Cys446-Cys465, Cys472-Cys486, Cys480-Cys495, Cys497-Cys516, Cys523-Cys536, Cys530-Cys545, Cys547-Cys565, Cys618-Cys632, Cys626-Cys642, Cys644-Cys662, Cys669-Cys682, Cys676-Cys691, Cys693-Cys712, Cys718-Cys729, Cys723-Cys738, Cys740-Cys759, Cys766-Cys779, Cys773-Cys788, Cys790-Cys809, Cys820-Cys836, Cys828-Cys845, Cys847-Cys859, Cys865-Cys879, Cys873-Cys888, Cys890-Cys907, Cys914-Cys930, Cys924-Cys939, Cys941-Cys960, Cys967-Cys981, Cys975-Cys990, Cys992-Cys1011, Cys1033-Cys1046, Cys1040-Cys1055, Cys1057-Cys1069, Cys1075-Cys1087, Cys1081-Cys1096, Cys1098-Cys1117, Cys1124-Cys1137, Cys1131-Cys1146, Cys1148-Cys1167, Cys1174-Cys1188, Cys1182-Cys1197, and Cys1199-Cys1218. Asn383 is a glycosylation site (N-linked (GlcNAc...) asparagine). Residue Asn515 is glycosylated (N-linked (GlcNAc...) asparagine). Residues 1230–1406 form the VWFA domain; that stretch reads DLVFLIDGSG…DLDTRLRSMI (177 aa). N-linked (GlcNAc...) asparagine glycosylation occurs at Asn1350. EGF-like domains lie at 1421–1466, 1466–1510, 1521–1562, 1563–1608, 1608–1656, 1658–1706, 1708–1755, 1759–1807, 1809–1860, 1862–1911, 1913–1961, 1963–2011, 2014–2062, 2068–2112, 2113–2160, 2162–2208, 2210–2258, 2260–2308, 2310–2358, 2360–2408, 2409–2455, 2456–2504, 2513–2563, 2565–2616, 2618–2666, 2668–2714, 2716–2763, 2763–2811, and 2833–2872; these read SEDV…RVCG, GGDL…GFCV, HDAN…GQCA, YPGS…DICL, LKNE…RVCV, LQNE…MVCK, LVNE…RRCE, TNDK…RLCI, VIPE…RLCK, LQNE…RKCK, LINE…RRCL, RINE…RICR, LVDE…RLCQ, PPPE…GSCS, IINE…RMCK, MVNE…RICK, LTNE…RACR, LVNE…RVCL, FINE…RVCV, LVDE…RVCS, APEV…RVCV, RNNA…RVCE, PRHP…RLCV, TEPV…RICK, LINE…RICS, SVNE…HRCS, MINE…RICR, RLNE…RICI, and REFP…GKCQ. 66 disulfide bridges follow: Cys1425–Cys1441, Cys1433–Cys1450, Cys1452–Cys1465, Cys1470–Cys1484, Cys1478–Cys1494, Cys1496–Cys1509, Cys1525–Cys1538, Cys1532–Cys1547, Cys1549–Cys1561, Cys1567–Cys1583, Cys1575–Cys1592, Cys1594–Cys1607, Cys1612–Cys1625, Cys1619–Cys1634, Cys1636–Cys1655, Cys1662–Cys1675, Cys1669–Cys1684, Cys1686–Cys1705, Cys1712–Cys1726, Cys1720–Cys1735, Cys1737–Cys1754, Cys1763–Cys1776, Cys1770–Cys1786, Cys1788–Cys1806, Cys1813–Cys1829, Cys1821–Cys1838, Cys1840–Cys1859, Cys1866–Cys1880, Cys1873–Cys1889, Cys1891–Cys1910, Cys1917–Cys1930, Cys1924–Cys1939, Cys1941–Cys1960, Cys1967–Cys1980, Cys1974–Cys1989, Cys1991–Cys2010, Cys2018–Cys2031, Cys2025–Cys2040, Cys2042–Cys2061, Cys2072–Cys2088, Cys2080–Cys2097, Cys2099–Cys2111, Cys2117–Cys2131, Cys2125–Cys2140, Cys2142–Cys2159, Cys2166–Cys2180, Cys2174–Cys2189, Cys2191–Cys2207, Cys2214–Cys2228, Cys2222–Cys2237, Cys2239–Cys2257, Cys2264–Cys2278, Cys2272–Cys2287, Cys2289–Cys2307, Cys2314–Cys2327, Cys2321–Cys2336, Cys2338–Cys2357, Cys2364–Cys2377, Cys2371–Cys2386, Cys2388–Cys2407, Cys2413–Cys2425, Cys2419–Cys2435, Cys2437–Cys2454, Cys2460–Cys2474, Cys2468–Cys2483, and Cys2485–Cys2503. A disordered region spans residues 2492–2521; it reads RSPDSSQRGRVCEPPPPPSPPPRHPCQDPE. Over residues 2504–2515 the composition is skewed to pro residues; sequence EPPPPPSPPPRH. 21 cysteine pairs are disulfide-bonded: Cys2517/Cys2531, Cys2525/Cys2541, Cys2543/Cys2562, Cys2569/Cys2583, Cys2577/Cys2594, Cys2596/Cys2615, Cys2622/Cys2636, Cys2630/Cys2645, Cys2647/Cys2665, Cys2672/Cys2686, Cys2680/Cys2695, Cys2697/Cys2713, Cys2720/Cys2734, Cys2728/Cys2743, Cys2745/Cys2762, Cys2767/Cys2781, Cys2775/Cys2790, Cys2792/Cys2810, Cys2837/Cys2850, Cys2842/Cys2856, and Cys2858/Cys2871. One can recognise an SEA 1 domain in the interval 2873–2999; the sequence is EVQETPFELR…GSLRVASDTD (127 aa). Asn2944 is a glycosylation site (N-linked (GlcNAc...) asparagine). An EGF-like 47 domain is found at 3009–3048; that stretch reads EWGNCGGMSCKEHLKEVCIAGHICGCPDGMKRRDANSECR. 3 cysteine pairs are disulfide-bonded: Cys3013–Cys3026, Cys3018–Cys3032, and Cys3034–Cys3047. Residues 3049-3174 enclose the SEA 2 domain; the sequence is VVESWNVPLW…SELYLNPTQP (126 aa). Asn3120 and Asn3130 each carry an N-linked (GlcNAc...) asparagine glycan. EGF-like domains follow at residues 3176–3220, 3224–3272, and 3272–3324; these read PFNP…KKCL, GFNE…SLCV, and VLDY…TLCM. Intrachain disulfides connect Cys3180-Cys3191, Cys3185-Cys3201, Cys3203-Cys3219, Cys3228-Cys3242, Cys3236-Cys3251, Cys3253-Cys3271, Cys3276-Cys3288, Cys3282-Cys3297, Cys3299-Cys3323, Cys3332-Cys3345, Cys3339-Cys3354, Cys3356-Cys3372, Cys3377-Cys3386, Cys3380-Cys3397, and Cys3399-Cys3408. Asn3285 carries an N-linked (GlcNAc...) asparagine glycan. The EGF-like 51; calcium-binding domain maps to 3328–3373; that stretch reads DVDECALGLNNCSGVAHCIDRAVGYTCKCPDGYIDGNPDEPGRVCG. Asn3337 carries an N-linked (GlcNAc...) asparagine; atypical glycan. Asn3338 carries N-linked (GlcNAc...) asparagine glycosylation. One can recognise an EGF-like 52 domain in the interval 3373 to 3409; sequence GALLCDLCNAHGDCVHNTATNNITCVCTDGWTGPQCQ. The N-linked (GlcNAc...) asparagine glycan is linked to Asn3394. Residue Asn3414 is glycosylated (N-linked (GlcNAc...) asparagine). Residues 3418–3438 traverse the membrane as a helical segment; the sequence is VLLILLALLFLLLTLCCLLYF. Topologically, residues 3439 to 3767 are cytoplasmic; it reads CTKCHCFKGR…SQTSTHVTKK (329 aa). Positions 3582 to 3729 are disordered; sequence TTTTDEQGNT…EEDVEHSVGD (148 aa). The segment covering 3588–3597 has biased composition (polar residues); sequence QGNTIVTTTE. The segment covering 3630–3665 has biased composition (low complexity); the sequence is QSQSQQQQSMSQGMSQSMSQHATSAGYSSSGMESSA. A compositionally biased stretch (basic and acidic residues) spans 3675–3684; the sequence is HTGERERGGS. Positions 3690–3702 are enriched in low complexity; that stretch reads IGRARGMAAASSG.

Expressed in the hypodermis at the sites of muscle contact, in striated muscles including body wall muscles, the anal sphincter muscles and the junctions between the anal sphincter muscle and rectal cuticle. Also expressed in non-muscle cells including the excretory duct cell and pore cells.

The protein localises to the cell membrane. It is found in the cell junction. The protein resides in the hemidesmosome. Involved in cell adhesion and required for organ positioning and attachment. At the hypodermal surface, required for attachment of the hypdermermis to the basal cuticle in postembryonic development, possibly through intermediate filaments of the cytoskeleton. This Caenorhabditis elegans protein is Transmembrane cell adhesion receptor mua-3.